The primary structure comprises 467 residues: H(+)/Cl(-) exchange transporter ClcA (467 aa).

The Cytoplasmic portion of the chain corresponds to 1–30 (MKSQTIPTRRVRGFRRAAVIRQLLSRDKTP). The chain crosses the membrane as a helical span at residues 31–67 (LTILLLASLTGVLAGLAGVAFEKAVAWVTAHRIEGLA). At 68–74 (QVAHIPW) the chain is on the periplasmic side. The chain crosses the membrane as a helical span at residues 75-98 (LVWLLAFLFSALLAMVGYFLVRRF). At 99 to 106 (APEAGGSG) the chain is on the cytoplasmic side. A Selectivity filter part_1 motif is present at residues 104–108 (GSGIP). Ser105 is a chloride binding site. Residues 107–114 (IPEIEGAL) constitute an intramembrane region (helical). The Cytoplasmic portion of the chain corresponds to 115–121 (EELRPVR). Residues 122–139 (WWRVLPVKFFGGMGTLGA) form a helical membrane-spanning segment. Residues 140-145 (GMVLGR) are Periplasmic-facing. The Selectivity filter part_2 motif lies at 144 to 148 (GREGP). The helical transmembrane segment at 146–164 (EGPMVQMGGNIGRMVLDIF) threads the bilayer. At 165-174 (HRPDAEARHT) the chain is on the cytoplasmic side. 2 intramembrane regions (helical) span residues 175–187 (LLAT…LAAA) and 191–199 (PLAGILFII). The Cytoplasmic segment spans residues 200–212 (EEMRTQFHYNLIS). The chain crosses the membrane as a helical span at residues 213 to 230 (IKAVFTGVIMSTIVFRIF). Topologically, residues 231-250 (NGEKSVIEVGQLTDAPVYTL) are periplasmic. Residues 251–279 (WLYLLLGIIFGAVGPLFNRLVLGMQDVFA) form a helical membrane-spanning segment. Topologically, residues 280–285 (RIHGGN) are cytoplasmic. A helical membrane pass occupies residues 286–307 (TTRWVLLGGAIGGACGLLALWE). Residues 308 to 327 (PAAAGGGFGLIPIAAAGNFT) lie on the Periplasmic side of the membrane. The chain crosses the membrane as a helical span at residues 328-347 (VGMLLFIFIARVVTTVFCFS). Residues 348-352 (SGAPG) lie on the Cytoplasmic side of the membrane. Residues 353-357 (GIFAP) carry the Selectivity filter part_3 motif. Residues 353–374 (GIFAPMLALGTLLGSAFGMACA) traverse the membrane as a helical segment. 2 residues coordinate chloride: Ile354 and Phe355. The Periplasmic portion of the chain corresponds to 375–384 (AWFPQWHLQA). Residues 385–399 (GTFAIAGMGALLAAS) constitute an intramembrane region (helical). The segment at residues 400 to 402 (VRA) is an intramembrane region (note=Loop between two helices). An intramembrane region (helical) is located at residues 403-414 (PITGIVLVLEMT). Positions 415–419 (DNYQL) form an intramembrane region, note=Loop between two helices. The chain crosses the membrane as a helical span at residues 420-436 (ILPMIITCLGATLLAQF). Residues 437–467 (LGGKPLYSTILARTLAKQEAERQAQADGRNT) lie on the Cytoplasmic side of the membrane. Position 443 (Tyr443) interacts with chloride.

This sequence belongs to the chloride channel (TC 2.A.49) family. ClcA subfamily. Homodimer.

The protein localises to the cell inner membrane. It catalyses the reaction 2 chloride(in) + H(+)(out) = 2 chloride(out) + H(+)(in). In terms of biological role, proton-coupled chloride transporter. Functions as antiport system and exchanges two chloride ions for 1 proton. Probably acts as an electrical shunt for an outwardly-directed proton pump that is linked to amino acid decarboxylation, as part of the extreme acid resistance (XAR) response. In Cronobacter sakazakii (strain ATCC BAA-894) (Enterobacter sakazakii), this protein is H(+)/Cl(-) exchange transporter ClcA.